The chain runs to 122 residues: Large ribosomal subunit protein uL18 (122 aa).

The protein belongs to the universal ribosomal protein uL18 family. Part of the 50S ribosomal subunit; part of the 5S rRNA/L5/L18/L25 subcomplex. Contacts the 5S and 23S rRNAs.

This is one of the proteins that bind and probably mediate the attachment of the 5S RNA into the large ribosomal subunit, where it forms part of the central protuberance. The polypeptide is Large ribosomal subunit protein uL18 (Desulforapulum autotrophicum (strain ATCC 43914 / DSM 3382 / VKM B-1955 / HRM2) (Desulfobacterium autotrophicum)).